The following is a 1343-amino-acid chain: Protein cordon-bleu (1343 aa).

Disordered regions lie at residues 1–51, 301–479, 522–613, 733–808, 1056–1077, and 1105–1148; these read MNLG…GDCK, KVEL…PAAE, VSVA…NGYE, IDKP…TRVL, EKPT…KSLD, and INNF…NVFG. Residues 20 to 30 show a composition bias toward pro residues; it reads APPPPRPPQPA. The KKRRAP 1 motif lies at 305 to 310; sequence KKRRAP. The span at 324–335 shows a compositional bias: polar residues; that stretch reads SQISLGSPSSHN. The KKRRAP 2 motif lies at 338–343; the sequence is KKRKAP. Pro residues predominate over residues 343 to 354; sequence PAPPPTPPPSTP. The segment covering 390–400 has biased composition (basic and acidic residues); it reads DLSHSIEDSEP. Over residues 406 to 422 the composition is skewed to low complexity; sequence SSSSGDDAAAVGSSSSS. Residues 445–460 are compositionally biased toward basic and acidic residues; it reads PEPKPEYEPELKKEAS. Polar residues predominate over residues 552–573; the sequence is ERMQSVSPMDIMSLNSDSTLPV. Basic and acidic residues predominate over residues 746-757; sequence PSQDAKITDNME. The segment covering 773–789 has biased composition (polar residues); that stretch reads VELTSQKDTVLQKSQSF. Residues 1105–1122 are compositionally biased toward polar residues; sequence INNFPDTSSARQTPTDTT. The segment covering 1128-1137 has biased composition (basic and acidic residues); it reads KKPELHKSEI. 2 WH2 domains span residues 1167–1187 and 1207–1227; these read IHSS…LRKV and ERSA…LKKT. Residues 1246 to 1297 form a disordered region; sequence NVHTEVISPRPTSPDFVPPLPPSFSPPPPPPPPLAPAKPPVVLPPGGNPEAA. Pro residues predominate over residues 1261-1292; sequence FVPPLPPSFSPPPPPPPPLAPAKPPVVLPPGG. The WH2 3 domain maps to 1297–1317; sequence AREALLEAIRSGSGAQQLRKV.

Interacts with pacsin1.

Its subcellular location is the cell membrane. The protein localises to the cytoplasm. The protein resides in the cytoskeleton. It localises to the cell projection. It is found in the ruffle. Its subcellular location is the cytosol. In terms of biological role, plays an important role in the reorganization of the actin cytoskeleton. Binds to and sequesters actin monomers (G actin). Nucleates actin polymerization by assembling three actin monomers in cross-filament orientation and thereby promotes growth of actin filaments at the barbed end. Can also mediate actin depolymerization at barbed ends and severing of actin filaments. Promotes formation of cell ruffles. Regulates neuron morphogenesis and increases branching of axons and dendrites. Required for normal embryonic development, including normal development of laterality, normal body size and shape, as well as normal brain, heart and kidney development. Required for normal development of stereocilia and kinocilia in sensory hair cells of neuromasts in the posterior lateral line organ, and thus also for balance keeping and normal swimming behavior. The sequence is that of Protein cordon-bleu (cobl) from Danio rerio (Zebrafish).